The sequence spans 82 residues: Small ribosomal subunit protein uS17 (82 aa).

This sequence belongs to the universal ribosomal protein uS17 family. In terms of assembly, part of the 30S ribosomal subunit.

In terms of biological role, one of the primary rRNA binding proteins, it binds specifically to the 5'-end of 16S ribosomal RNA. The sequence is that of Small ribosomal subunit protein uS17 from Nitrobacter winogradskyi (strain ATCC 25391 / DSM 10237 / CIP 104748 / NCIMB 11846 / Nb-255).